Consider the following 305-residue polypeptide: NAD-dependent protein deacylase sirtuin-5, mitochondrial (305 aa).

The transit peptide at 1–32 (MIVRQLWCSRGSTSHLCAAVRLNWRSPKMTRP) directs the protein to the mitochondrion. The Deacetylase sirtuin-type domain occupies 33–303 (SSDLTAFREH…PPALERHESE (271 aa)). Residue 54 to 73 (GAGVSAESGVPTFRGPGGFW) participates in NAD(+) binding. 2 residues coordinate substrate: Tyr-98 and Arg-101. 136–139 (QNID) is an NAD(+) binding site. The Proton acceptor role is filled by His-154. Positions 162, 165, 203, and 208 each coordinate Zn(2+). NAD(+) is bound by residues 245-247 (GTS), 271-273 (NME), and Cys-289.

This sequence belongs to the sirtuin family. Class III subfamily. Requires Zn(2+) as cofactor.

It localises to the mitochondrion. The protein localises to the cytoplasm. The protein resides in the cytosol. It is found in the nucleus. The enzyme catalyses N(6)-malonyl-L-lysyl-[protein] + NAD(+) + H2O = 2''-O-malonyl-ADP-D-ribose + nicotinamide + L-lysyl-[protein]. It carries out the reaction N(6)-succinyl-L-lysyl-[protein] + NAD(+) + H2O = 2''-O-succinyl-ADP-D-ribose + nicotinamide + L-lysyl-[protein]. The catalysed reaction is N(6)-glutaryl-L-lysyl-[protein] + NAD(+) + H2O = 2''-O-glutaryl-ADP-D-ribose + nicotinamide + L-lysyl-[protein]. In terms of biological role, NAD-dependent lysine demalonylase, desuccinylase and deglutarylase that specifically removes malonyl, succinyl and glutaryl groups on target proteins. Has weak NAD-dependent protein deacetylase activity; however this activity may not be physiologically relevant in vivo. This chain is NAD-dependent protein deacylase sirtuin-5, mitochondrial (sirt5), found in Danio rerio (Zebrafish).